The following is a 290-amino-acid chain: MDVSKALLWLEKQQTESAVKKAAKVADRTANEGLIGTTVLSSGVANGRRVGVRAAMVELNCETDFVARNELFANLLEDITHTAAFISEPANAETFMQPFSMETLQNAPLLSQTKPSQNGKATVSEAMRDLTGRVGEKISLRRALTVVRDPFTSSQPDLALRVAARVHQSVFNPTQGRIGSLALLALKSKRLSEVIASQTFQDDLDKLCQALGRQVIGFPTTCIRSPSGTTDEGALYDQPFSMFIGPGNDQSVGAFLQSWAQERSLVNEDEEQSAGVEVLEFAKWSVGEVV.

This sequence belongs to the EF-Ts family.

Its subcellular location is the mitochondrion. Functionally, associates with the EF-Tu.GDP complex and induces the exchange of GDP to GTP. It remains bound to the aminoacyl-tRNA.EF-Tu.GTP complex up to the GTP hydrolysis stage on the ribosome. This is Elongation factor Ts, mitochondrial 1 from Postia placenta (strain ATCC 44394 / Madison 698-R) (Brown rot fungus).